Here is a 603-residue protein sequence, read N- to C-terminus: Aspartate--tRNA(Asp/Asn) ligase (603 aa).

Positions 205–208 (QLFK) are aspartate. Residue R227 coordinates L-aspartate. Residues 227-229 (RDE) and Q236 each bind ATP. H463 provides a ligand contact to L-aspartate. ATP is bound at residue E497. Residue R504 participates in L-aspartate binding. Residue 549 to 552 (GMDR) participates in ATP binding.

This sequence belongs to the class-II aminoacyl-tRNA synthetase family. Type 1 subfamily. As to quaternary structure, homodimer.

It localises to the cytoplasm. The catalysed reaction is tRNA(Asx) + L-aspartate + ATP = L-aspartyl-tRNA(Asx) + AMP + diphosphate. Aspartyl-tRNA synthetase with relaxed tRNA specificity since it is able to aspartylate not only its cognate tRNA(Asp) but also tRNA(Asn). Reaction proceeds in two steps: L-aspartate is first activated by ATP to form Asp-AMP and then transferred to the acceptor end of tRNA(Asp/Asn). The polypeptide is Aspartate--tRNA(Asp/Asn) ligase (Anaeromyxobacter sp. (strain K)).